The sequence spans 212 residues: Glycerol-3-phosphate acyltransferase (212 aa).

5 helical membrane-spanning segments follow: residues 3-23 (IIIMIIIAYLLGSIQTGLWIG), 70-90 (IPIILGITTVSPFFIGFFAII), 110-130 (AGVLLGFAPSFFLYLLVIFLL), 143-163 (ITVAVVGILSVLIFPLVGFIL), and 164-184 (TDYDWIFTTVVILMALTIIIR).

The protein belongs to the PlsY family. As to quaternary structure, probably interacts with PlsX.

The protein localises to the cell membrane. The catalysed reaction is an acyl phosphate + sn-glycerol 3-phosphate = a 1-acyl-sn-glycero-3-phosphate + phosphate. Its pathway is lipid metabolism; phospholipid metabolism. Catalyzes the transfer of an acyl group from acyl-phosphate (acyl-PO(4)) to glycerol-3-phosphate (G3P) to form lysophosphatidic acid (LPA). This enzyme utilizes acyl-phosphate as fatty acyl donor, but not acyl-CoA or acyl-ACP. This chain is Glycerol-3-phosphate acyltransferase, found in Streptococcus agalactiae serotype III (strain NEM316).